The chain runs to 651 residues: Cytoplasmic tyrosine-protein kinase BMX (651 aa).

The PH domain maps to 4-111 (KSILEELLLK…WLKALQKEIR (108 aa)). A Btk-type zinc finger spans residues 113–149 (NPHLLIKYHSGFFVDGKFLCCQQSCKAAPGCTLWEAY). 4 residues coordinate Zn(2+): histidine 121, cysteine 132, cysteine 133, and cysteine 143. The region spanning 272 to 368 (WFAGNISRSQ…GMITRLRHPV (97 aa)) is the SH2 domain. The region spanning 393-646 (ITLLKELGNG…QLLSAIEPLR (254 aa)) is the Protein kinase domain. ATP-binding positions include 399-407 (LGNGQFGVV) and lysine 421. The Proton acceptor role is filled by aspartate 512. Tyrosine 542 bears the Phosphotyrosine; by SRC and autocatalysis mark.

Belongs to the protein kinase superfamily. Tyr protein kinase family. TEC subfamily. In terms of assembly, interacts with BCAR1, CAV1, MYD88, PTK2/FAK1, RUFY1, RUFY2, STAT3, TIRAP and TNFRSF1B. Requires Zn(2+) as cofactor. In terms of processing, phosphorylated in response to protein I/II and to LPS. Phosphorylation at Tyr-542 by SRC and by autocatalysis leads to activation and is required for STAT3 phosphorylation by BMX. In terms of tissue distribution, specifically expressed in the endocardium of the developing heart as well as in the endocardium of the left ventricle and in the endothelium of large arteries in adult mice.

The protein localises to the cytoplasm. It catalyses the reaction L-tyrosyl-[protein] + ATP = O-phospho-L-tyrosyl-[protein] + ADP + H(+). With respect to regulation, TEK and vascular endothelial growth factor receptor 1 (FLT1) stimulate BMX tyrosine kinase activity. Activated by integrins through the mediation of PTK2/FAK1. Activated by TNF through the mediation of TNFRSF1B. In terms of biological role, non-receptor tyrosine kinase that plays central but diverse modulatory roles in various signaling processes involved in the regulation of actin reorganization, cell migration, cell proliferation and survival, cell adhesion, and apoptosis. Participates in signal transduction stimulated by growth factor receptors, cytokine receptors, G-protein coupled receptors, antigen receptors and integrins. Induces tyrosine phosphorylation of BCAR1 in response to integrin regulation. Activation of BMX by integrins is mediated by PTK2/FAK1, a key mediator of integrin signaling events leading to the regulation of actin cytoskeleton and cell motility. Plays a critical role in TNF-induced angiogenesis, and implicated in the signaling of TEK and FLT1 receptors, 2 important receptor families essential for angiogenesis. Required for the phosphorylation and activation of STAT3, a transcription factor involved in cell differentiation. Also involved in interleukin-6 (IL6) induced differentiation. Also plays a role in programming adaptive cytoprotection against extracellular stress in different cell systems, salivary epithelial cells, brain endothelial cells, and dermal fibroblasts. May be involved in regulation of endocytosis through its interaction with an endosomal protein RUFY1. May also play a role in the growth and differentiation of hematopoietic cells; as well as in signal transduction in endocardial and arterial endothelial cells. The protein is Cytoplasmic tyrosine-protein kinase BMX (Bmx) of Mus musculus (Mouse).